The chain runs to 140 residues: Natriuretic peptides A (140 aa).

Residues 1-24 form the signal peptide; sequence MDTRGSFSCGFLLLLLIQLQPSRA. Residues 25–111 constitute a propeptide that is removed on maturation; sequence NPIYNLSPAK…KRLRGVQMPR (87 aa). The disordered stretch occupies residues 55–94; it reads ALESNPDLQEPQTQEEIPPELTDDSDEQKAEPKLASNTPL. The segment covering 71–80 has biased composition (acidic residues); the sequence is IPPELTDDSD. Cysteines 118 and 134 form a disulfide.

The protein belongs to the natriuretic peptide family. In terms of processing, cleaved by CORIN upon secretion to produce the functional hormone.

Its subcellular location is the secreted. Functionally, hormone playing a key role in cardiovascular homeostasis through regulation of natriuresis, diuresis, and vasodilation. Specifically binds and stimulates the cGMP production of the NPR1 receptor. Binds the clearance receptor NPR3. The polypeptide is Natriuretic peptides A (NPPA) (Gallus gallus (Chicken)).